Reading from the N-terminus, the 151-residue chain is Ribosomal RNA large subunit methyltransferase H (151 aa).

Residues Leu-73, Gly-100, and 119 to 124 (LSDLTM) contribute to the S-adenosyl-L-methionine site.

The protein belongs to the RNA methyltransferase RlmH family. Homodimer.

The protein resides in the cytoplasm. The enzyme catalyses pseudouridine(1915) in 23S rRNA + S-adenosyl-L-methionine = N(3)-methylpseudouridine(1915) in 23S rRNA + S-adenosyl-L-homocysteine + H(+). Specifically methylates the pseudouridine at position 1915 (m3Psi1915) in 23S rRNA. The protein is Ribosomal RNA large subunit methyltransferase H of Aliarcobacter butzleri (strain RM4018) (Arcobacter butzleri).